Reading from the N-terminus, the 480-residue chain is Adenylosuccinate lyase (480 aa).

Residues Arg14, Tyr15, Arg79, His80, and Asp81 each coordinate AMP. Residue His80 participates in fumarate binding. His153 serves as the catalytic Proton donor/acceptor. Gln236 provides a ligand contact to AMP. Position 236 (Gln236) interacts with fumarate. A N(6)-(1,2-dicarboxyethyl)-AMP-binding site is contributed by Gln236. Residue Ser284 is the Proton donor/acceptor of the active site. Fumarate is bound by residues Ser285, Lys290, and Asn292. Positions 285, 290, and 292 each coordinate N(6)-(1,2-dicarboxyethyl)-AMP. AMP is bound at residue Arg298. Residues Arg324, Ser329, and Arg333 each coordinate N(6)-(1,2-dicarboxyethyl)-AMP. Positions 329 and 333 each coordinate AMP.

It belongs to the lyase 1 family. Adenylosuccinate lyase subfamily. Homotetramer.

It carries out the reaction N(6)-(1,2-dicarboxyethyl)-AMP = fumarate + AMP. The protein operates within purine metabolism; AMP biosynthesis via salvage pathway. Functionally, catalyzes conversion of succinyladenosine monophosphate (SAMP) to AMP and fumarate on the purine salvage pathway. This chain is Adenylosuccinate lyase, found in Schistosoma mansoni (Blood fluke).